The primary structure comprises 205 residues: Small ribosomal subunit protein uS4 (205 aa).

Residues 103-173 (RRLQTIVMKK…LEKSKRAEAA (71 aa)) enclose the S4 RNA-binding domain. Residues 174–205 (AREAAAEAAEAEQAAAQAAAPTPAPAAAAPKQ) form a disordered region. Positions 179–205 (AEAAEAEQAAAQAAAPTPAPAAAAPKQ) are enriched in low complexity.

The protein belongs to the universal ribosomal protein uS4 family. In terms of assembly, part of the 30S ribosomal subunit. Contacts protein S5. The interaction surface between S4 and S5 is involved in control of translational fidelity.

One of the primary rRNA binding proteins, it binds directly to 16S rRNA where it nucleates assembly of the body of the 30S subunit. Its function is as follows. With S5 and S12 plays an important role in translational accuracy. The polypeptide is Small ribosomal subunit protein uS4 (Cenarchaeum symbiosum (strain A)).